A 210-amino-acid chain; its full sequence is Small heat shock protein hspG6 (210 aa).

The sHSP domain occupies 34 to 210 (KTIIDKLPPM…YSNTIKININ (177 aa)). A disordered region spans residues 93-151 (VIEKSTSSSTLDSKEDEPSIEEFEDDIKPKSKSDNTTVSTTTTATTKENKEDENKTKST). Residues 126 to 138 (DNTTVSTTTTATT) are compositionally biased toward low complexity. The span at 139–151 (KENKEDENKTKST) shows a compositional bias: basic and acidic residues.

It belongs to the small heat shock protein (HSP20) family.

This is Small heat shock protein hspG6 (hspG6) from Dictyostelium discoideum (Social amoeba).